The primary structure comprises 305 residues: GMP synthase [glutamine-hydrolyzing] subunit B (305 aa).

Positions 2-184 constitute a GMPS ATP-PPase domain; the sequence is VKTEKFIQKS…LGLPPEIQHR (183 aa). Residue 29 to 35 coordinates ATP; that stretch reads SGGVDSS.

In terms of assembly, heterodimer composed of a glutamine amidotransferase subunit (A) and a GMP-binding subunit (B).

It carries out the reaction XMP + L-glutamine + ATP + H2O = GMP + L-glutamate + AMP + diphosphate + 2 H(+). It functions in the pathway purine metabolism; GMP biosynthesis; GMP from XMP (L-Gln route): step 1/1. Functionally, catalyzes the synthesis of GMP from XMP. This chain is GMP synthase [glutamine-hydrolyzing] subunit B, found in Methanoregula boonei (strain DSM 21154 / JCM 14090 / 6A8).